The primary structure comprises 485 residues: Probable serine/threonine-protein kinase nek1 (485 aa).

Residues 12–283 enclose the Protein kinase domain; the sequence is YLIKSQIGSG…TQQILEQVFI (272 aa). Residues 18 to 26 and Lys-41 contribute to the ATP site; that span reads IGSGSYGNT. Asp-136 (proton acceptor) is an active-site residue. The segment covering 354 to 365 has biased composition (polar residues); that stretch reads KNQQQQSPQKLE. The disordered stretch occupies residues 354 to 419; sequence KNQQQQSPQK…NNDKNNNINN (66 aa). The segment covering 366-419 has biased composition (low complexity); it reads NNNNNNNDNNNNNNNNNNNNNNNNNNNNNNNNNNNNNNNNNNNNNNDKNNNINN.

The protein belongs to the protein kinase superfamily. NEK Ser/Thr protein kinase family. NIMA subfamily.

It catalyses the reaction L-seryl-[protein] + ATP = O-phospho-L-seryl-[protein] + ADP + H(+). It carries out the reaction L-threonyl-[protein] + ATP = O-phospho-L-threonyl-[protein] + ADP + H(+). This is Probable serine/threonine-protein kinase nek1 (nek1) from Dictyostelium discoideum (Social amoeba).